The primary structure comprises 687 residues: Putative lipase YDR444W (687 aa).

Ser284 acts as the Charge relay system in catalysis. Disordered regions lie at residues 429-472 (IRKK…AESP), 491-513 (KINK…EQGV), and 650-687 (ELAE…ENAT). Low complexity predominate over residues 436-463 (SPTSSEFVSSDSPESSGASSPSNENGNN). A compositionally biased stretch (basic and acidic residues) spans 670–681 (RSNEYNEGEISK).

This sequence belongs to the putative lipase ROG1 family.

It localises to the cytoplasm. This is Putative lipase YDR444W from Saccharomyces cerevisiae (strain ATCC 204508 / S288c) (Baker's yeast).